A 175-amino-acid polypeptide reads, in one-letter code: NADH-ubiquinone oxidoreductase chain 6 (175 aa).

A run of 5 helical transmembrane segments spans residues 1–21, 25–45, 47–67, 88–108, and 149–169; these read MMLY…VGFS, SPIY…GIVL, FGGS…MMVV, AVLG…YYVL, and YGTW…VVIM.

It belongs to the complex I subunit 6 family. Core subunit of respiratory chain NADH dehydrogenase (Complex I) which is composed of 45 different subunits.

It localises to the mitochondrion inner membrane. It catalyses the reaction a ubiquinone + NADH + 5 H(+)(in) = a ubiquinol + NAD(+) + 4 H(+)(out). In terms of biological role, core subunit of the mitochondrial membrane respiratory chain NADH dehydrogenase (Complex I) which catalyzes electron transfer from NADH through the respiratory chain, using ubiquinone as an electron acceptor. Essential for the catalytic activity and assembly of complex I. This chain is NADH-ubiquinone oxidoreductase chain 6 (MT-ND6), found in Bos mutus grunniens (Wild yak).